We begin with the raw amino-acid sequence, 320 residues long: Acetyl-coenzyme A carboxylase carboxyl transferase subunit alpha (320 aa).

Residues Ile42–Asp295 form the CoA carboxyltransferase C-terminal domain.

Belongs to the AccA family. Acetyl-CoA carboxylase is a heterohexamer composed of biotin carboxyl carrier protein (AccB), biotin carboxylase (AccC) and two subunits each of ACCase subunit alpha (AccA) and ACCase subunit beta (AccD).

It localises to the cytoplasm. The enzyme catalyses N(6)-carboxybiotinyl-L-lysyl-[protein] + acetyl-CoA = N(6)-biotinyl-L-lysyl-[protein] + malonyl-CoA. The protein operates within lipid metabolism; malonyl-CoA biosynthesis; malonyl-CoA from acetyl-CoA: step 1/1. Its function is as follows. Component of the acetyl coenzyme A carboxylase (ACC) complex. First, biotin carboxylase catalyzes the carboxylation of biotin on its carrier protein (BCCP) and then the CO(2) group is transferred by the carboxyltransferase to acetyl-CoA to form malonyl-CoA. The chain is Acetyl-coenzyme A carboxylase carboxyl transferase subunit alpha from Afipia carboxidovorans (strain ATCC 49405 / DSM 1227 / KCTC 32145 / OM5) (Oligotropha carboxidovorans).